We begin with the raw amino-acid sequence, 220 residues long: Guanylate kinase (220 aa).

A Guanylate kinase-like domain is found at 14–194 (GLMVVISSPS…SYAAIKSIIN (181 aa)). ATP is bound at residue 21–28 (SPSGAGKS).

Belongs to the guanylate kinase family.

It localises to the cytoplasm. It carries out the reaction GMP + ATP = GDP + ADP. In terms of biological role, essential for recycling GMP and indirectly, cGMP. The protein is Guanylate kinase of Brucella abortus (strain 2308).